We begin with the raw amino-acid sequence, 1098 residues long: Unconventional myosin-If (1098 aa).

The Myosin motor domain maps to 17–690; sequence SGVDDMVLLP…SLFLLEEVRE (674 aa). 110–117 lines the ATP pocket; sequence GESGAGKT. The tract at residues 579 to 589 is actin-binding; it reads PHYIRCIKPNE. The 30-residue stretch at 693–722 folds into the IQ domain; it reads FDGFARTIQKAWRRHVAVRKYEEMREEASN. In terms of domain architecture, TH1 spans 728-917; the sequence is KERRRNSINR…GRTLTVSVGD (190 aa). Disordered stretches follow at residues 913-1009 and 1021-1044; these read VSVG…EFLN and KRSV…THGP. A compositionally biased stretch (basic residues) spans 924-937; that stretch reads KPTRKGMAKGKPRR. At serine 1023 the chain carries Phosphoserine. Residues 1041–1098 form the SH3 domain; it reads THGPRCRALYQYVGQDVDELSFNVNEVIEILMEDPSGWWKGRLHGQEGLFPGNYVEKI.

It belongs to the TRAFAC class myosin-kinesin ATPase superfamily. Myosin family.

Its function is as follows. Myosins are actin-based motor molecules with ATPase activity. Unconventional myosins serve in intracellular movements. Their highly divergent tails are presumed to bind to membranous compartments, which would be moved relative to actin filaments. This chain is Unconventional myosin-If (MYO1F), found in Homo sapiens (Human).